The chain runs to 102 residues: Small ribosomal subunit protein uS10 (102 aa).

Belongs to the universal ribosomal protein uS10 family. Part of the 30S ribosomal subunit.

In terms of biological role, involved in the binding of tRNA to the ribosomes. The sequence is that of Small ribosomal subunit protein uS10 from Brucella abortus (strain S19).